We begin with the raw amino-acid sequence, 97 residues long: Co-chaperonin GroES (97 aa).

Belongs to the GroES chaperonin family. In terms of assembly, heptamer of 7 subunits arranged in a ring. Interacts with the chaperonin GroEL.

The protein resides in the cytoplasm. Functionally, together with the chaperonin GroEL, plays an essential role in assisting protein folding. The GroEL-GroES system forms a nano-cage that allows encapsulation of the non-native substrate proteins and provides a physical environment optimized to promote and accelerate protein folding. GroES binds to the apical surface of the GroEL ring, thereby capping the opening of the GroEL channel. The polypeptide is Co-chaperonin GroES (Buchnera aphidicola subsp. Pterocomma populeum).